A 491-amino-acid chain; its full sequence is Putative diacyglycerol O-acyltransferase MT2557 (491 aa).

The active-site Proton acceptor is His-145.

This sequence belongs to the long-chain O-acyltransferase family.

The catalysed reaction is an acyl-CoA + a 1,2-diacyl-sn-glycerol = a triacyl-sn-glycerol + CoA. The protein operates within glycerolipid metabolism; triacylglycerol biosynthesis. This chain is Putative diacyglycerol O-acyltransferase MT2557, found in Mycobacterium tuberculosis (strain CDC 1551 / Oshkosh).